Here is a 200-residue protein sequence, read N- to C-terminus: 3-isopropylmalate dehydratase small subunit (200 aa).

The protein belongs to the LeuD family. LeuD type 1 subfamily. In terms of assembly, heterodimer of LeuC and LeuD.

The enzyme catalyses (2R,3S)-3-isopropylmalate = (2S)-2-isopropylmalate. Its pathway is amino-acid biosynthesis; L-leucine biosynthesis; L-leucine from 3-methyl-2-oxobutanoate: step 2/4. In terms of biological role, catalyzes the isomerization between 2-isopropylmalate and 3-isopropylmalate, via the formation of 2-isopropylmaleate. The sequence is that of 3-isopropylmalate dehydratase small subunit from Campylobacter jejuni subsp. jejuni serotype O:6 (strain 81116 / NCTC 11828).